The sequence spans 404 residues: Cysteine desulfurase IscS (404 aa).

Pyridoxal 5'-phosphate contacts are provided by residues 75–76 (AT), N155, Q183, and 203–205 (SAH). Position 206 is an N6-(pyridoxal phosphate)lysine (K206). A pyridoxal 5'-phosphate-binding site is contributed by T243. C328 functions as the Cysteine persulfide intermediate in the catalytic mechanism. C328 provides a ligand contact to [2Fe-2S] cluster.

This sequence belongs to the class-V pyridoxal-phosphate-dependent aminotransferase family. NifS/IscS subfamily. In terms of assembly, homodimer. Forms a heterotetramer with IscU, interacts with other sulfur acceptors. Pyridoxal 5'-phosphate serves as cofactor.

The protein localises to the cytoplasm. It carries out the reaction (sulfur carrier)-H + L-cysteine = (sulfur carrier)-SH + L-alanine. Its pathway is cofactor biosynthesis; iron-sulfur cluster biosynthesis. Master enzyme that delivers sulfur to a number of partners involved in Fe-S cluster assembly, tRNA modification or cofactor biosynthesis. Catalyzes the removal of elemental sulfur atoms from cysteine to produce alanine. Functions as a sulfur delivery protein for Fe-S cluster synthesis onto IscU, an Fe-S scaffold assembly protein, as well as other S acceptor proteins. The protein is Cysteine desulfurase IscS of Pseudomonas aeruginosa (strain LESB58).